Here is a 366-residue protein sequence, read N- to C-terminus: Flagellar P-ring protein (366 aa).

The signal sequence occupies residues 1-20 (MVIKFLSALILLLVTTAAQA).

The protein belongs to the FlgI family. As to quaternary structure, the basal body constitutes a major portion of the flagellar organelle and consists of four rings (L,P,S, and M) mounted on a central rod.

It is found in the periplasm. Its subcellular location is the bacterial flagellum basal body. In terms of biological role, assembles around the rod to form the L-ring and probably protects the motor/basal body from shearing forces during rotation. This is Flagellar P-ring protein from Escherichia coli (strain SE11).